The sequence spans 460 residues: MISAISSPWLTQLSHFCDVAAFTTSSLSSLNTPGSYHLSPSPGDPYSHHESQFEPCPAAQHAYNYSGSNSAQAPAQGDSGTSNCSSSSSSSTPNKTLVKKNPKVANINVQLEMKALWDEFNQLGTEMIVTKAGRRMFPTFQVKIFGMDPMADYMLLMDFLPVDDKRYRYAFHSSSWLVAGKADPATPGRVHYHPDSPAKGAQWMKQIVSFDKLKLTNNLLDDNGHIILNSMHRYQPRFHVVYVDPRKDSEKYAEENYKTFVFEETRFTAVTAYQNHRITQLKIASNPFAKGFRDCDPEDWPRNHRPGSLQIMSAFARTRNPMSSPPQQNGTEKEDSRREYDRDPSGNPLHSDPTHQLMSRVLSPALPVLGGLHAVPLTAGPRSPPHELRLDGHPQPPDTLHHHPYKYPATYEHYLGAKTRPSPYPSPSIRGHGYHPHMNPTTANMYSATSAPTNYDYGPR.

Disordered regions lie at residues 30–53 (LNTP…ESQF) and 67–99 (GSNS…TLVK). Polar residues predominate over residues 67 to 84 (GSNSAQAPAQGDSGTSNC). Residues 116–294 (LWDEFNQLGT…SNPFAKGFRD (179 aa)) constitute a DNA-binding region (T-box). Disordered regions lie at residues 317–355 (RTRN…DPTH) and 376–400 (PLTA…PDTL). Positions 320-330 (NPMSSPPQQNG) are enriched in polar residues. The span at 331 to 344 (TEKEDSRREYDRDP) shows a compositional bias: basic and acidic residues. A Nuclear localization signal motif is present at residues 418–429 (KTRPSPYPSPSI).

As to quaternary structure, binds DNA as a dimer. Expressed in the ear and mesendodermal components of pharyngeal arches.

Its subcellular location is the nucleus. Probable transcriptional regulator involved in developmental processes. Binds to the palindromic T site 5'-TTCACACCTAGGTGTGAA-3' DNA sequence. Is required for normal development of the pharyngeal arch arteries. Acts cell autonomously in the pharyngeal mesendoderm and influences the development of neural crest-derived cartilages secondarily. The protein is T-box transcription factor TBX1 (tbx1) of Danio rerio (Zebrafish).